We begin with the raw amino-acid sequence, 356 residues long: MAKSKKIVFTGGGTVGHVTLNLILIPKFLKDGWEVHYIGDKHGVEHEQIDKSGLDVTFHSIATGKLRRYFSWQNMLDVFKVGWGILQSIAIIAKIRPQALFSKGGFVSVPPVIASKLLRVPVYVHESDLSMGLANKIAYKFATTMFTTFEQSKTLVKTRHVGAITKVGMTRFDNSDQLDKIKEQFDEKLKTVLFIGGSAGAKVFNDFISKTPELIENYNIINISGDSSLNTLERHLYRVDYVTDLYQPLMDMADLVVTRGGSNTIFELLAMKKLHLIVPLGKEASRGDQLENADYFERKGYARQLQEPELSWETLKHELEQLVEHAETYKEAMAKSEEITSPDDFYNLLVTSISNK.

Residues S198 and Q289 each coordinate UDP-N-acetyl-alpha-D-glucosamine.

The protein belongs to the glycosyltransferase 28 family. MurG subfamily.

It is found in the cell membrane. The enzyme catalyses Mur2Ac(oyl-L-Ala-gamma-D-Glu-L-Lys-D-Ala-D-Ala)-di-trans,octa-cis-undecaprenyl diphosphate + UDP-N-acetyl-alpha-D-glucosamine = beta-D-GlcNAc-(1-&gt;4)-Mur2Ac(oyl-L-Ala-gamma-D-Glu-L-Lys-D-Ala-D-Ala)-di-trans,octa-cis-undecaprenyl diphosphate + UDP + H(+). It functions in the pathway cell wall biogenesis; peptidoglycan biosynthesis. Cell wall formation. Catalyzes the transfer of a GlcNAc subunit on undecaprenyl-pyrophosphoryl-MurNAc-pentapeptide (lipid intermediate I) to form undecaprenyl-pyrophosphoryl-MurNAc-(pentapeptide)GlcNAc (lipid intermediate II). This Streptococcus thermophilus (strain CNRZ 1066) protein is UDP-N-acetylglucosamine--N-acetylmuramyl-(pentapeptide) pyrophosphoryl-undecaprenol N-acetylglucosamine transferase.